Reading from the N-terminus, the 73-residue chain is Cell division protein ZapB (73 aa).

Residues leucine 3–glycine 67 adopt a coiled-coil conformation.

It belongs to the ZapB family. In terms of assembly, homodimer. The ends of the coiled-coil dimer bind to each other, forming polymers. Interacts with FtsZ.

The protein resides in the cytoplasm. Its function is as follows. Non-essential, abundant cell division factor that is required for proper Z-ring formation. It is recruited early to the divisome by direct interaction with FtsZ, stimulating Z-ring assembly and thereby promoting cell division earlier in the cell cycle. Its recruitment to the Z-ring requires functional FtsA or ZipA. The chain is Cell division protein ZapB from Shewanella sp. (strain ANA-3).